Reading from the N-terminus, the 265-residue chain is Undecaprenyl-diphosphatase (265 aa).

The next 8 helical transmembrane spans lie at 15 to 37, 41 to 61, 85 to 105, 109 to 129, 144 to 164, 183 to 203, 218 to 238, and 244 to 264; these read GLTEFLPVSSTGHLIITGYLLEY, KAESFQVAIQLGAILAVVFLY, YLLALTSAPASVLGLLTHSFI, LFGPVTVAWALAAGALYILAV, VSPALALGIGMFQCLALWPGF, LAAEYSFVAAVPIMFAATGYD, FWAVGLLVSFASAWAAVKGFI, and VTFRPFAWYRLALAPVVLLFW.

Belongs to the UppP family.

It localises to the cell inner membrane. It carries out the reaction di-trans,octa-cis-undecaprenyl diphosphate + H2O = di-trans,octa-cis-undecaprenyl phosphate + phosphate + H(+). Its function is as follows. Catalyzes the dephosphorylation of undecaprenyl diphosphate (UPP). Confers resistance to bacitracin. The chain is Undecaprenyl-diphosphatase from Oleidesulfovibrio alaskensis (strain ATCC BAA-1058 / DSM 17464 / G20) (Desulfovibrio alaskensis).